Reading from the N-terminus, the 460-residue chain is ATP synthase subunit beta (460 aa).

An ATP-binding site is contributed by 150–157; sequence GGAGVGKT.

Belongs to the ATPase alpha/beta chains family. F-type ATPases have 2 components, CF(1) - the catalytic core - and CF(0) - the membrane proton channel. CF(1) has five subunits: alpha(3), beta(3), gamma(1), delta(1), epsilon(1). CF(0) has three main subunits: a(1), b(2) and c(9-12). The alpha and beta chains form an alternating ring which encloses part of the gamma chain. CF(1) is attached to CF(0) by a central stalk formed by the gamma and epsilon chains, while a peripheral stalk is formed by the delta and b chains.

It localises to the cell inner membrane. It catalyses the reaction ATP + H2O + 4 H(+)(in) = ADP + phosphate + 5 H(+)(out). In terms of biological role, produces ATP from ADP in the presence of a proton gradient across the membrane. The catalytic sites are hosted primarily by the beta subunits. This chain is ATP synthase subunit beta, found in Sodalis glossinidius (strain morsitans).